The sequence spans 300 residues: Mycothiol acetyltransferase (300 aa).

N-acetyltransferase domains lie at 4-140 and 151-300; these read IDWR…RPLT and VRLA…AVAD. Position 36 (D36) interacts with 1D-myo-inositol 2-(L-cysteinylamino)-2-deoxy-alpha-D-glucopyranoside. Acetyl-CoA is bound at residue 79 to 81; it reads LVV. 1D-myo-inositol 2-(L-cysteinylamino)-2-deoxy-alpha-D-glucopyranoside is bound by residues E178, K219, and E227. 231–233 contacts acetyl-CoA; it reads VGV. Y269 is a binding site for 1D-myo-inositol 2-(L-cysteinylamino)-2-deoxy-alpha-D-glucopyranoside. 274-279 contributes to the acetyl-CoA binding site; the sequence is NGAAVK.

It belongs to the acetyltransferase family. MshD subfamily. As to quaternary structure, monomer.

It carries out the reaction 1D-myo-inositol 2-(L-cysteinylamino)-2-deoxy-alpha-D-glucopyranoside + acetyl-CoA = mycothiol + CoA + H(+). In terms of biological role, catalyzes the transfer of acetyl from acetyl-CoA to desacetylmycothiol (Cys-GlcN-Ins) to form mycothiol. This chain is Mycothiol acetyltransferase, found in Mycobacterium sp. (strain MCS).